Reading from the N-terminus, the 312-residue chain is HPr kinase/phosphorylase (312 aa).

Catalysis depends on residues His-139 and Lys-160. Gly-154–Ser-161 provides a ligand contact to ATP. Ser-161 contributes to the Mg(2+) binding site. The active-site Proton acceptor; for phosphorylation activity. Proton donor; for dephosphorylation activity is Asp-178. Residues Leu-202–Asn-211 form an important for the catalytic mechanism of both phosphorylation and dephosphorylation region. A Mg(2+)-binding site is contributed by Glu-203. Arg-244 is a catalytic residue. The segment at Pro-265–Arg-270 is important for the catalytic mechanism of dephosphorylation.

It belongs to the HPrK/P family. As to quaternary structure, homohexamer. Mg(2+) is required as a cofactor.

The catalysed reaction is [HPr protein]-L-serine + ATP = [HPr protein]-O-phospho-L-serine + ADP + H(+). It carries out the reaction [HPr protein]-O-phospho-L-serine + phosphate + H(+) = [HPr protein]-L-serine + diphosphate. Its function is as follows. Catalyzes the ATP- as well as the pyrophosphate-dependent phosphorylation of a specific serine residue in HPr, a phosphocarrier protein of the phosphoenolpyruvate-dependent sugar phosphotransferase system (PTS). HprK/P also catalyzes the pyrophosphate-producing, inorganic phosphate-dependent dephosphorylation (phosphorolysis) of seryl-phosphorylated HPr (P-Ser-HPr). The two antagonistic activities of HprK/P are regulated by several intracellular metabolites, which change their concentration in response to the absence or presence of rapidly metabolisable carbon sources (glucose, fructose, etc.) in the growth medium. Therefore, by controlling the phosphorylation state of HPr, HPrK/P is a sensor enzyme that plays a major role in the regulation of carbon metabolism and sugar transport: it mediates carbon catabolite repression (CCR), and regulates PTS-catalyzed carbohydrate uptake and inducer exclusion. The protein is HPr kinase/phosphorylase of Listeria welshimeri serovar 6b (strain ATCC 35897 / DSM 20650 / CCUG 15529 / CIP 8149 / NCTC 11857 / SLCC 5334 / V8).